The chain runs to 266 residues: Sesquipedalian-1 (266 aa).

Residues 17–113 (PVDNAGFLYK…WVKALSRASF (97 aa)) form the PH domain. The disordered stretch occupies residues 165–184 (QPSVAPQRPPPLPPRRRASA). Ser183 carries the phosphoserine modification. The F&amp;H motif lies at 191–203 (SFAQLHARYGLEV).

It belongs to the sesquipedalian family. Forms homodimers and heterodimers with PHETA2. Interacts with OCRL and INPP5B. Interaction with OCRL may be important for endosomal morphology and function.

The protein resides in the early endosome. The protein localises to the recycling endosome. Its subcellular location is the golgi apparatus. It is found in the trans-Golgi network. It localises to the cytoplasmic vesicle. The protein resides in the clathrin-coated vesicle. In terms of biological role, plays a role in endocytic trafficking. Required for receptor recycling from endosomes, both to the trans-Golgi network and the plasma membrane. This Mus musculus (Mouse) protein is Sesquipedalian-1.